Here is an 80-residue protein sequence, read N- to C-terminus: Small ribosomal subunit protein uS17 (80 aa).

Belongs to the universal ribosomal protein uS17 family. As to quaternary structure, part of the 30S ribosomal subunit.

Functionally, one of the primary rRNA binding proteins, it binds specifically to the 5'-end of 16S ribosomal RNA. This chain is Small ribosomal subunit protein uS17, found in Beijerinckia indica subsp. indica (strain ATCC 9039 / DSM 1715 / NCIMB 8712).